A 73-amino-acid chain; its full sequence is Kazal peptide Pr13a (73 aa).

The N-terminal stretch at 1 to 20 (MKYIILFLVLIGLQANLALG) is a signal peptide. Residues 21–73 (SKCKCDCTKYPYSPVCAKELKTGDTETFNNVCQLQCYNCTHMKNYVVIYSGSC) enclose the Kazal-like domain. 3 cysteine pairs are disulfide-bonded: Cys-23–Cys-59, Cys-27–Cys-52, and Cys-36–Cys-73.

In terms of tissue distribution, expressed by the venom gland (anterior main gland) (at protein level).

Its subcellular location is the secreted. Functionally, may act as a serine protease inhibitor, since it possess the kazal serine protease inhibitor signature. The chain is Kazal peptide Pr13a from Platymeris rhadamanthus (Red spot assassin bug).